We begin with the raw amino-acid sequence, 239 residues long: 1-(5-phosphoribosyl)-5-[(5-phosphoribosylamino)methylideneamino] imidazole-4-carboxamide isomerase (239 aa).

Asp-9 (proton acceptor) is an active-site residue. The Proton donor role is filled by Asp-131.

The protein belongs to the HisA/HisF family.

It is found in the cytoplasm. The enzyme catalyses 1-(5-phospho-beta-D-ribosyl)-5-[(5-phospho-beta-D-ribosylamino)methylideneamino]imidazole-4-carboxamide = 5-[(5-phospho-1-deoxy-D-ribulos-1-ylimino)methylamino]-1-(5-phospho-beta-D-ribosyl)imidazole-4-carboxamide. It participates in amino-acid biosynthesis; L-histidine biosynthesis; L-histidine from 5-phospho-alpha-D-ribose 1-diphosphate: step 4/9. The chain is 1-(5-phosphoribosyl)-5-[(5-phosphoribosylamino)methylideneamino] imidazole-4-carboxamide isomerase from Bacteroides fragilis (strain YCH46).